The sequence spans 230 residues: Dephospho-CoA kinase (230 aa).

The 223-residue stretch at 3 to 225 (IIGLTGGIAT…REGGAICPTP (223 aa)) folds into the DPCK domain. Residue 11-16 (ATGKST) participates in ATP binding.

This sequence belongs to the CoaE family.

The protein resides in the cytoplasm. It catalyses the reaction 3'-dephospho-CoA + ATP = ADP + CoA + H(+). It participates in cofactor biosynthesis; coenzyme A biosynthesis; CoA from (R)-pantothenate: step 5/5. Functionally, catalyzes the phosphorylation of the 3'-hydroxyl group of dephosphocoenzyme A to form coenzyme A. The polypeptide is Dephospho-CoA kinase (Synechococcus sp. (strain JA-3-3Ab) (Cyanobacteria bacterium Yellowstone A-Prime)).